Consider the following 141-residue polypeptide: Hemoglobin subunit zeta (141 aa).

Serine 1 is subject to N-acetylserine. The region spanning 1 to 141 is the Globin domain; that stretch reads SLTKAERTII…VSGVLTEKYR (141 aa). Position 28 is a phosphothreonine (threonine 28). Phosphoserine is present on serine 52. A heme b-binding site is contributed by histidine 58. Serine 72 carries the phosphoserine modification. Histidine 87 provides a ligand contact to heme b.

This sequence belongs to the globin family. In terms of assembly, heterotetramer of two zeta chains and two epsilon chains.

In terms of biological role, the zeta chain is an alpha-type chain of mammalian embryonic hemoglobin. This Sus scrofa (Pig) protein is Hemoglobin subunit zeta.